Reading from the N-terminus, the 392-residue chain is Heat-inducible transcription repressor HrcA (392 aa).

The protein belongs to the HrcA family.

Its function is as follows. Negative regulator of class I heat shock genes (grpE-dnaK-dnaJ and groELS operons). Prevents heat-shock induction of these operons. This chain is Heat-inducible transcription repressor HrcA, found in Chlamydia trachomatis serovar L2 (strain ATCC VR-902B / DSM 19102 / 434/Bu).